The following is a 353-amino-acid chain: Lysophosphatidic acid receptor 3 (353 aa).

The Extracellular segment spans residues 1-31 (MNECHYDKHMDFFYNRSNTDTVDDWTGTKLV). Asn-15 is a glycosylation site (N-linked (GlcNAc...) asparagine). The helical transmembrane segment at 32–52 (IVLCVGTFFCLFIFFSNSLVI) threads the bilayer. Residues 53-67 (AAVIKNRKFHFPFYY) lie on the Cytoplasmic side of the membrane. Residues 68-88 (LLANLAAADFFAGIAYVFLMF) traverse the membrane as a helical segment. Residues 89-101 (NTGPVSKTLTVNR) are Extracellular-facing. The helical transmembrane segment at 102 to 124 (WFLRQGLLDSSLTASLTNLLVIA) threads the bilayer. Topologically, residues 125–146 (VERHMSIMRMRVHSNLTKKRVT) are cytoplasmic. The helical transmembrane segment at 147 to 167 (LLILLVWAIAIFMGAVPTLGW) threads the bilayer. Topologically, residues 168 to 186 (NCLCNISACSSLAPIYSRS) are extracellular. Residue Asn-172 is glycosylated (N-linked (GlcNAc...) asparagine). The helical transmembrane segment at 187–207 (YLVFWTVSNLMAFLIMVVVYL) threads the bilayer. The Cytoplasmic portion of the chain corresponds to 208 to 240 (RIYVYVKRKTNVLSPHTSGSISRRRTPMKLMKT). Residues 241–261 (VMTVLGAFVVCWTPGLVVLLL) form a helical membrane-spanning segment. Residues 262 to 276 (DGLNCRQCGVQHVKR) are Extracellular-facing. The chain crosses the membrane as a helical span at residues 277–297 (WFLLLALLNSVVNPIIYSYKD). Residues 298-353 (EDMYGTMKKMICCFSQENPERRPSRIPSTVLSRSDTGSQYIEDSISQGAVCNKSTS) are Cytoplasmic-facing. Cys-309 carries S-palmitoyl cysteine lipidation.

This sequence belongs to the G-protein coupled receptor 1 family. In terms of tissue distribution, most abundantly expressed in prostate, testes, pancreas, and heart, with moderate levels in lung and ovary. No detectable expression in brain, placenta, liver, skeletal muscle, kidney, spleen, thymus, small intestine, colon, or peripheral blood leukocytes.

It localises to the cell membrane. Its function is as follows. Receptor for lysophosphatidic acid (LPA), a mediator of diverse cellular activities. May play a role in the development of ovarian cancer. Seems to be coupled to the G(i)/G(o) and G(q) families of heteromeric G proteins. This Homo sapiens (Human) protein is Lysophosphatidic acid receptor 3 (LPAR3).